We begin with the raw amino-acid sequence, 261 residues long: Imidazole glycerol phosphate synthase subunit HisF (261 aa).

Residues D11 and D130 contribute to the active site.

This sequence belongs to the HisA/HisF family. As to quaternary structure, heterodimer of HisH and HisF.

The protein resides in the cytoplasm. It catalyses the reaction 5-[(5-phospho-1-deoxy-D-ribulos-1-ylimino)methylamino]-1-(5-phospho-beta-D-ribosyl)imidazole-4-carboxamide + L-glutamine = D-erythro-1-(imidazol-4-yl)glycerol 3-phosphate + 5-amino-1-(5-phospho-beta-D-ribosyl)imidazole-4-carboxamide + L-glutamate + H(+). The protein operates within amino-acid biosynthesis; L-histidine biosynthesis; L-histidine from 5-phospho-alpha-D-ribose 1-diphosphate: step 5/9. In terms of biological role, IGPS catalyzes the conversion of PRFAR and glutamine to IGP, AICAR and glutamate. The HisF subunit catalyzes the cyclization activity that produces IGP and AICAR from PRFAR using the ammonia provided by the HisH subunit. In Jannaschia sp. (strain CCS1), this protein is Imidazole glycerol phosphate synthase subunit HisF.